Reading from the N-terminus, the 345-residue chain is Phenylalanine--tRNA ligase alpha subunit (345 aa).

Mg(2+) is bound at residue Glu-259.

It belongs to the class-II aminoacyl-tRNA synthetase family. Phe-tRNA synthetase alpha subunit type 1 subfamily. In terms of assembly, tetramer of two alpha and two beta subunits. Requires Mg(2+) as cofactor.

It is found in the cytoplasm. The catalysed reaction is tRNA(Phe) + L-phenylalanine + ATP = L-phenylalanyl-tRNA(Phe) + AMP + diphosphate + H(+). This chain is Phenylalanine--tRNA ligase alpha subunit, found in Lactococcus lactis subsp. cremoris (strain MG1363).